The primary structure comprises 316 residues: N-acetyl-gamma-glutamyl-phosphate reductase (316 aa).

Cysteine 136 is a catalytic residue.

Belongs to the NAGSA dehydrogenase family. Type 1 subfamily.

The protein resides in the cytoplasm. The enzyme catalyses N-acetyl-L-glutamate 5-semialdehyde + phosphate + NADP(+) = N-acetyl-L-glutamyl 5-phosphate + NADPH + H(+). It functions in the pathway amino-acid biosynthesis; L-arginine biosynthesis; N(2)-acetyl-L-ornithine from L-glutamate: step 3/4. In terms of biological role, catalyzes the NADPH-dependent reduction of N-acetyl-5-glutamyl phosphate to yield N-acetyl-L-glutamate 5-semialdehyde. In Xanthomonas oryzae pv. oryzae (strain MAFF 311018), this protein is N-acetyl-gamma-glutamyl-phosphate reductase.